A 312-amino-acid chain; its full sequence is Acetyl-coenzyme A carboxylase carboxyl transferase subunit alpha (312 aa).

Residues 36–286 (RLDKEVKSIY…KEYFLDALRT (251 aa)) form the CoA carboxyltransferase C-terminal domain.

The protein belongs to the AccA family. Acetyl-CoA carboxylase is a heterohexamer composed of biotin carboxyl carrier protein (AccB), biotin carboxylase (AccC) and two subunits each of ACCase subunit alpha (AccA) and ACCase subunit beta (AccD).

Its subcellular location is the cytoplasm. It carries out the reaction N(6)-carboxybiotinyl-L-lysyl-[protein] + acetyl-CoA = N(6)-biotinyl-L-lysyl-[protein] + malonyl-CoA. Its pathway is lipid metabolism; malonyl-CoA biosynthesis; malonyl-CoA from acetyl-CoA: step 1/1. Functionally, component of the acetyl coenzyme A carboxylase (ACC) complex. First, biotin carboxylase catalyzes the carboxylation of biotin on its carrier protein (BCCP) and then the CO(2) group is transferred by the carboxyltransferase to acetyl-CoA to form malonyl-CoA. The sequence is that of Acetyl-coenzyme A carboxylase carboxyl transferase subunit alpha from Helicobacter pylori (strain Shi470).